Here is a 181-residue protein sequence, read N- to C-terminus: uncharacterized protein (181 aa).

The N-terminal stretch at 1–22 (MNKKSLLVVLVIALAVVPFAAT) is a signal peptide.

This is an uncharacterized protein from Halorubrum pleomorphic virus 1 (HRPV-1).